Reading from the N-terminus, the 284-residue chain is D-tagatose-1,6-bisphosphate aldolase subunit GatY (284 aa).

D82 acts as the Proton donor in catalysis. 2 residues coordinate Zn(2+): H83 and H180. Position 181 (G181) interacts with dihydroxyacetone phosphate. Residue H208 coordinates Zn(2+). Dihydroxyacetone phosphate-binding positions include 209-211 (GAS) and 230-233 (NVAT).

This sequence belongs to the class II fructose-bisphosphate aldolase family. TagBP aldolase GatY subfamily. Forms a complex with GatZ. Requires Zn(2+) as cofactor.

It carries out the reaction D-tagatofuranose 1,6-bisphosphate = D-glyceraldehyde 3-phosphate + dihydroxyacetone phosphate. Its pathway is carbohydrate metabolism; D-tagatose 6-phosphate degradation; D-glyceraldehyde 3-phosphate and glycerone phosphate from D-tagatose 6-phosphate: step 2/2. In terms of biological role, catalytic subunit of the tagatose-1,6-bisphosphate aldolase GatYZ, which catalyzes the reversible aldol condensation of dihydroxyacetone phosphate (DHAP or glycerone-phosphate) with glyceraldehyde 3-phosphate (G3P) to produce tagatose 1,6-bisphosphate (TBP). Requires GatZ subunit for full activity and stability. Is involved in the catabolism of galactitol. The protein is D-tagatose-1,6-bisphosphate aldolase subunit GatY of Escherichia coli O139:H28 (strain E24377A / ETEC).